A 190-amino-acid polypeptide reads, in one-letter code: MDRTEQKSIIEGLLFVSGDEGISPEQIAKVLEIEGNEVINILEEMQKECEGAHRGLQIVQYAKVYRFATKKEHASYYQKLIDIPTAASLSQAALETLAIVAYRQPITRTEMEEIRGVKTDKALQTLVSHLLIKEMGRAEGPGRPILYGTTKEFLDTFGLKTLDDLPPLSEENEQMNEADLFFGSLQEISK.

This sequence belongs to the ScpB family. In terms of assembly, homodimer. Homodimerization may be required to stabilize the binding of ScpA to the Smc head domains. Component of a cohesin-like complex composed of ScpA, ScpB and the Smc homodimer, in which ScpA and ScpB bind to the head domain of Smc. The presence of the three proteins is required for the association of the complex with DNA.

Its subcellular location is the cytoplasm. Its function is as follows. Participates in chromosomal partition during cell division. May act via the formation of a condensin-like complex containing Smc and ScpA that pull DNA away from mid-cell into both cell halves. The protein is Segregation and condensation protein B of Bacillus cereus (strain AH187).